A 411-amino-acid chain; its full sequence is Lysosome-associated membrane glycoprotein 3 (411 aa).

The N-terminal stretch at 1–21 (MPGQISAVAVLFLSLTVILHG) is a signal peptide. Topologically, residues 22–376 (YQIREKEFPK…NVNECLSDYT (355 aa)) are lumenal. A compositionally biased stretch (polar residues) spans 172-192 (HKSTTNQRPTLSTNVLGTSTP). Residues 172-204 (HKSTTNQRPTLSTNVLGTSTPTHKDRSTTSPVP) form a disordered region. Asn227 is a glycosylation site (N-linked (GlcNAc...) asparagine). Cystine bridges form between Cys232-Cys269 and Cys334-Cys371. A helical transmembrane segment spans residues 377–397 (VVLPMVAIIVVVICVVGLSVY). The Cytoplasmic segment spans residues 398-411 (KIRQRHQSSAYQRI).

The protein belongs to the LAMP family. In terms of assembly, monomer. Interacts with FURIN.

Its subcellular location is the cell surface. It localises to the lysosome membrane. The protein resides in the cytoplasmic vesicle membrane. It is found in the early endosome membrane. Lysosomal membrane glycoprotein which plays a role in the unfolded protein response (UPR) that contributes to protein degradation and cell survival during proteasomal dysfunction. Plays a role in the process of fusion of the lysosome with the autophagosome, thereby modulating the autophagic process. Promotes hepatocellular lipogenesis through activation of the PI3K/Akt pathway. May also play a role in dendritic cell function and in adaptive immunity. The polypeptide is Lysosome-associated membrane glycoprotein 3 (Lamp3) (Mus musculus (Mouse)).